The following is a 1737-amino-acid chain: Complement C4 (1737 aa).

Residues 1–19 (MRLLWGLAWAFSFFASSLQ) form the signal peptide. Residues Cys-66 and Cys-95 are joined by a disulfide bond. N-linked (GlcNAc...) asparagine glycosylation is found at Asn-224 and Asn-664. Cys-633 and Cys-667 are oxidised to a cystine. The propeptide occupies 674–677 (RQKR). 3 disulfides stabilise this stretch: Cys-700-Cys-726, Cys-701-Cys-733, and Cys-714-Cys-734. The 35-residue stretch at 700-734 (CCQDGMTKLPMARTCEQRAARVPQPACREPFLSCC) folds into the Anaphylatoxin-like domain. Residue Asn-743 is glycosylated (N-linked (GlcNAc...) asparagine). The isoglutamyl cysteine thioester (Cys-Gln) cross-link spans 1005-1008 (CAEQ). N-linked (GlcNAc...) asparagine glycans are attached at residues Asn-1323 and Asn-1386. A sulfotyrosine mark is found at Tyr-1412, Tyr-1414, and Tyr-1416. Positions 1443–1446 (RRRR) are excised as a propeptide. Cystine bridges form between Cys-1464–Cys-1528, Cys-1576–Cys-1581, Cys-1588–Cys-1666, Cys-1611–Cys-1735, and Cys-1711–Cys-1720. Positions 1588 to 1735 (CPRQRRSLER…FLQEYSSQGC (148 aa)) constitute an NTR domain. At Tyr-1676 the chain carries Sulfotyrosine.

In terms of assembly, in absence of complement activation, circulates in blood as a disulfide-linked trimer of an alpha, beta and gamma chain. As to quaternary structure, complement C4b is composed of complement C4b-A, complement C4 beta and complement C4 gamma chains that are associated via disulfide bonds. Non-enzymatic component of the C3 convertase, also named C4bC2b, composed of the serine protease complement C2b (C2), as well as complement C4b. Non-enzymatic component of the C5 convertase, also named C4bC2bC3b, composed of the serine protease complement C2b (C2), complement C3b, as well as complement C4b. In terms of processing, prior to secretion, the single-chain precursor is enzymatically cleaved by plasminogen (PLG) to yield non-identical chains alpha, beta and gamma. During activation of the complement systems, the alpha chain is cleaved into C4a and C4b by different proteases depending on the complement pathway: C4b stays linked to the beta and gamma chains, while C4a is released in the plasma. The alpha chain is cleaved by C1S to generate C4a and C4b following activation by the classical complement system. The alpha chain is cleaved to generate C4a and C4b by MASP2 following activation by the lectin complement system. The alpha chain is cleaved by GZMK to generate C4a and C4b following activation by the GZMK complement system. Further degradation of C4b by C1 into the inactive fragments C4c and C4d blocks the generation of C3 convertase. The proteolytic cleavages often are incomplete so that many structural forms can be found in plasma. Post-translationally, upon activation, the internal thioester bond reacts with carbohydrate antigens on the target surface to form amide or ester bonds, leading to covalent association with the surface of pathogens. Complement C4b interacts with complement C3b via a thioester linkage. In terms of processing, N- and O-glycosylated. O-glycosylated with a core 1 or possibly core 8 glycan.

The protein localises to the secreted. The protein resides in the cell surface. Precursor of non-enzymatic components of the classical, lectin and GZMK complement pathways, which consist in a cascade of proteins that leads to phagocytosis and breakdown of pathogens and signaling that strengthens the adaptive immune system. In terms of biological role, non-enzymatic component of C3 and C5 convertases. Generated following cleavage by complement proteases (C1S, MASP2 or GZMK, depending on the complement pathway), it covalently attaches to the surface of pathogens, where it acts as an opsonin that marks the surface of antigens for removal. It then recruits the serine protease complement C2b to form the C3 and C5 convertases, which cleave and activate C3 and C5, respectively, the next components of the complement pathways. Complement C4b-A isotype is responsible for effective binding to form amide bonds with immune aggregates or protein antigens, while complement C4b-B isotype catalyzes the transacylation of the thioester carbonyl group to form ester bonds with carbohydrate antigens. Functionally, putative humoral mediator released following cleavage by complement proteases (C1S, MASP2 or GZMK, depending on the complement pathway). While it is strongly similar to anaphylatoxins, its role is unclear. Was reported to act as a mediator of local inflammatory process; however these effects were probably due to contamination with C3a and/C5a anaphylatoxins in biological assays. The chain is Complement C4 from Rattus norvegicus (Rat).